The sequence spans 450 residues: tRNA-2-methylthio-N(6)-dimethylallyladenosine synthase (450 aa).

Positions 7 to 127 (KKVFIKTYGC…LPDVLARVRG (121 aa)) constitute an MTTase N-terminal domain. [4Fe-4S] cluster contacts are provided by Cys16, Cys52, Cys90, Cys168, Cys172, and Cys175. The region spanning 154–388 (IKRGVTAFLT…LLLKQQQGFG (235 aa)) is the Radical SAM core domain. A TRAM domain is found at 389 to 450 (SSLVGSTIDT…GYNSLFAELA (62 aa)).

This sequence belongs to the methylthiotransferase family. MiaB subfamily. As to quaternary structure, monomer. The cofactor is [4Fe-4S] cluster.

The protein localises to the cytoplasm. It carries out the reaction N(6)-dimethylallyladenosine(37) in tRNA + (sulfur carrier)-SH + AH2 + 2 S-adenosyl-L-methionine = 2-methylsulfanyl-N(6)-dimethylallyladenosine(37) in tRNA + (sulfur carrier)-H + 5'-deoxyadenosine + L-methionine + A + S-adenosyl-L-homocysteine + 2 H(+). Its function is as follows. Catalyzes the methylthiolation of N6-(dimethylallyl)adenosine (i(6)A), leading to the formation of 2-methylthio-N6-(dimethylallyl)adenosine (ms(2)i(6)A) at position 37 in tRNAs that read codons beginning with uridine. This chain is tRNA-2-methylthio-N(6)-dimethylallyladenosine synthase, found in Mesorhizobium japonicum (strain LMG 29417 / CECT 9101 / MAFF 303099) (Mesorhizobium loti (strain MAFF 303099)).